Here is a 124-residue protein sequence, read N- to C-terminus: Snaclec rhodocetin subunit delta (124 aa).

Cystine bridges form between cysteine 1–cysteine 12, cysteine 29–cysteine 120, and cysteine 95–cysteine 112. Residues 8–121 (YNGYCYRVFS…CEKTVSFVCK (114 aa)) form the C-type lectin domain.

This sequence belongs to the snaclec family. Heterotetramer of subunit alpha, beta, gamma and delta; only the gamma and the delta subunits are disulfide-linked. Alpha-beta heterodimer and gamma-delta heterodimer associate orthogonally, giving a cruciform conformation. This heterotetramer may covalently dimerizes thanks to the gamma subunit. As to expression, expressed by the venom gland.

It is found in the secreted. In terms of biological role, potent inhibitor of collagen-induced platelet aggregation. It acts by binding to the integrin alpha2A domain and blocks collagen binding to integrin alpha-2/beta-1 (ITGA2/ITGB1). The gamma/delta subunits mainly contribute to this activity. The sequence is that of Snaclec rhodocetin subunit delta from Calloselasma rhodostoma (Malayan pit viper).